The primary structure comprises 575 residues: Centrosomal protein POC5 (575 aa).

Residues methionine 1–asparagine 26 are disordered. Phosphoserine occurs at positions 105 and 109. The stretch at histidine 142–asparagine 173 is one Centrin-binding (CBR) 1 repeat. Positions methionine 191–glutamate 222 form a coiled coil. Centrin-binding (CBR) repeat units follow at residues valine 231–alanine 262 and arginine 263–glutamine 295. A coiled-coil region spans residues serine 316–phenylalanine 355. Disordered regions lie at residues alanine 376 to proline 411 and lysine 538 to aspartate 575. Residues asparagine 382–histidine 400 show a composition bias toward basic and acidic residues. Lysine 538 carries the N6-acetyllysine modification. Residues proline 545–histidine 569 are compositionally biased toward polar residues. Serine 564 carries the post-translational modification Phosphoserine.

The protein belongs to the POC5 family. Interacts with CETN2 and CETN3. Forms a microtubule-associated complex with POC1B, CETN2 and FAM161A. Interacts with CCDC15. In terms of processing, hyperphosphorylated during recruitment to procentrioles in G2/M phase.

The protein localises to the cytoplasm. Its subcellular location is the cytoskeleton. The protein resides in the microtubule organizing center. It localises to the centrosome. It is found in the centriole. Functionally, essential for the assembly of the distal half of centrioles, required for centriole elongation. Acts as a negative regulator of centriole elongation. The polypeptide is Centrosomal protein POC5 (POC5) (Homo sapiens (Human)).